A 201-amino-acid chain; its full sequence is Probable GTP-binding protein EngB (201 aa).

In terms of domain architecture, EngB-type G spans 22-195; it reads SLPEIAFCGR…MEQLEMILKY (174 aa). GTP is bound by residues 30–37, 57–61, 75–78, 142–145, and 174–176; these read GRSNVGKS, GKTRT, DLPG, TKLD, and YSS. Mg(2+) is bound by residues S37 and T59.

The protein belongs to the TRAFAC class TrmE-Era-EngA-EngB-Septin-like GTPase superfamily. EngB GTPase family. Mg(2+) serves as cofactor.

In terms of biological role, necessary for normal cell division and for the maintenance of normal septation. The chain is Probable GTP-binding protein EngB from Finegoldia magna (strain ATCC 29328 / DSM 20472 / WAL 2508) (Peptostreptococcus magnus).